Here is a 318-residue protein sequence, read N- to C-terminus: D-alanine--D-alanine ligase (318 aa).

One can recognise an ATP-grasp domain in the interval 116–311 (KQVWQSLGIP…FQQLVLAILA (196 aa)). Position 142-197 (142-197 (STELGFPLIVKPAHEGSSIGMAKVNSAQELVAAWQDAAKYDSQVLVEQWIHGPEFT)) interacts with ATP. 3 residues coordinate Mg(2+): D265, E278, and N280.

Belongs to the D-alanine--D-alanine ligase family. It depends on Mg(2+) as a cofactor. Mn(2+) serves as cofactor.

It is found in the cytoplasm. The enzyme catalyses 2 D-alanine + ATP = D-alanyl-D-alanine + ADP + phosphate + H(+). It functions in the pathway cell wall biogenesis; peptidoglycan biosynthesis. Cell wall formation. The protein is D-alanine--D-alanine ligase of Pseudomonas putida (strain GB-1).